We begin with the raw amino-acid sequence, 224 residues long: MASPSFCLLAALLALVSWQAIASDPSPLQDFCVADKHSPVLVNGFACLDPKYVTADHFFKAAMLDTPRKTNKVGSNVTLINVMQIPGLNTLGISIARIDYAPLGENPPHTHPRATEILTVLEGTLYVGFVTSNPNNTLFSKVLNKGDVFVFPEGLIHFQFNPNPHQPAVAIAALSSQNPGAITIANAVFGSKPPISDKVLAKAFQVEKGTIDWLQAQFWENNHY.

The signal sequence occupies residues 1 to 22; that stretch reads MASPSFCLLAALLALVSWQAIA. A disulfide bridge connects residues C32 and C47. The Cupin type-1 domain occupies 62 to 212; it reads AMLDTPRKTN…AFQVEKGTID (151 aa). N-linked (GlcNAc...) asparagine glycosylation occurs at N76. 3 residues coordinate Mn(2+): H109, H111, and E116. An N-linked (GlcNAc...) asparagine glycan is attached at N135. H157 contributes to the Mn(2+) binding site.

The protein belongs to the germin family. As to quaternary structure, oligomer (believed to be a pentamer but probably hexamer).

Its subcellular location is the secreted. It localises to the extracellular space. The protein resides in the apoplast. In terms of biological role, plays a role in broad-spectrum disease resistance. Probably has no oxalate oxidase activity even if the active site is conserved. This chain is Germin-like protein 8-8, found in Oryza sativa subsp. japonica (Rice).